The chain runs to 301 residues: 4-diphosphocytidyl-2-C-methyl-D-erythritol kinase (301 aa).

Lysine 18 is an active-site residue. 109–119 (PIASGIGGGSA) lines the ATP pocket. Aspartate 151 is an active-site residue.

Belongs to the GHMP kinase family. IspE subfamily.

The catalysed reaction is 4-CDP-2-C-methyl-D-erythritol + ATP = 4-CDP-2-C-methyl-D-erythritol 2-phosphate + ADP + H(+). It participates in isoprenoid biosynthesis; isopentenyl diphosphate biosynthesis via DXP pathway; isopentenyl diphosphate from 1-deoxy-D-xylulose 5-phosphate: step 3/6. Its function is as follows. Catalyzes the phosphorylation of the position 2 hydroxy group of 4-diphosphocytidyl-2C-methyl-D-erythritol. In Rhizobium meliloti (strain 1021) (Ensifer meliloti), this protein is 4-diphosphocytidyl-2-C-methyl-D-erythritol kinase.